Here is a 356-residue protein sequence, read N- to C-terminus: Nicotinate-nucleotide--dimethylbenzimidazole phosphoribosyltransferase (356 aa).

E317 serves as the catalytic Proton acceptor.

This sequence belongs to the CobT family. Homodimer.

It catalyses the reaction 5,6-dimethylbenzimidazole + nicotinate beta-D-ribonucleotide = alpha-ribazole 5'-phosphate + nicotinate + H(+). Its pathway is nucleoside biosynthesis; alpha-ribazole biosynthesis; alpha-ribazole from 5,6-dimethylbenzimidazole: step 1/2. Its function is as follows. Catalyzes the synthesis of alpha-ribazole-5'-phosphate from nicotinate mononucleotide (NAMN) and 5,6-dimethylbenzimidazole (DMB). This Salmonella paratyphi C (strain RKS4594) protein is Nicotinate-nucleotide--dimethylbenzimidazole phosphoribosyltransferase.